Reading from the N-terminus, the 628-residue chain is Pinene synthase, chloroplastic (628 aa).

The N-terminal 36 residues, 1 to 36, are a transit peptide targeting the chloroplast; that stretch reads MALVSTAPLASKSCLHKSLISSTHELKALSRTIPAL. Residues D379, D383, and D531 each contribute to the Mg(2+) site. Residues 379–383 carry the DDXXD motif motif; sequence DDMYD.

It belongs to the terpene synthase family. Tpsd subfamily. The cofactor is Mg(2+). Requires Mn(2+) as cofactor. K(+) is required as a cofactor.

It localises to the plastid. The protein resides in the chloroplast. It catalyses the reaction (2E)-geranyl diphosphate = (1S,5S)-alpha-pinene + diphosphate. The enzyme catalyses (2E)-geranyl diphosphate = (1S,5S)-beta-pinene + diphosphate. The protein operates within terpene metabolism; oleoresin biosynthesis. Its function is as follows. Involved in defensive oleoresin formation in conifers in response to insect attack or other injury. Involved in monoterpene (C10) olefins biosynthesis. A mixture of alpha- and beta-pinene is produced by this enzyme. This is Pinene synthase, chloroplastic (ag3) from Abies grandis (Grand fir).